The chain runs to 362 residues: Phosphoserine aminotransferase (362 aa).

L-glutamate is bound at residue R43. Residues 77 to 78 (AT), W103, T153, D173, and Q196 each bind pyridoxal 5'-phosphate. K197 is modified (N6-(pyridoxal phosphate)lysine). Residue 238–239 (NT) coordinates pyridoxal 5'-phosphate.

This sequence belongs to the class-V pyridoxal-phosphate-dependent aminotransferase family. SerC subfamily. As to quaternary structure, homodimer. It depends on pyridoxal 5'-phosphate as a cofactor.

It localises to the cytoplasm. It carries out the reaction O-phospho-L-serine + 2-oxoglutarate = 3-phosphooxypyruvate + L-glutamate. The enzyme catalyses 4-(phosphooxy)-L-threonine + 2-oxoglutarate = (R)-3-hydroxy-2-oxo-4-phosphooxybutanoate + L-glutamate. It participates in amino-acid biosynthesis; L-serine biosynthesis; L-serine from 3-phospho-D-glycerate: step 2/3. Its pathway is cofactor biosynthesis; pyridoxine 5'-phosphate biosynthesis; pyridoxine 5'-phosphate from D-erythrose 4-phosphate: step 3/5. Functionally, catalyzes the reversible conversion of 3-phosphohydroxypyruvate to phosphoserine and of 3-hydroxy-2-oxo-4-phosphonooxybutanoate to phosphohydroxythreonine. The chain is Phosphoserine aminotransferase from Xylella fastidiosa (strain Temecula1 / ATCC 700964).